A 148-amino-acid chain; its full sequence is SsrA-binding protein (148 aa).

Residues 123–148 form a disordered region; it reads KLHDKRETEKKRDWEREKARIMRSAT. Residues 126–142 are compositionally biased toward basic and acidic residues; the sequence is DKRETEKKRDWEREKAR.

This sequence belongs to the SmpB family.

It is found in the cytoplasm. Functionally, required for rescue of stalled ribosomes mediated by trans-translation. Binds to transfer-messenger RNA (tmRNA), required for stable association of tmRNA with ribosomes. tmRNA and SmpB together mimic tRNA shape, replacing the anticodon stem-loop with SmpB. tmRNA is encoded by the ssrA gene; the 2 termini fold to resemble tRNA(Ala) and it encodes a 'tag peptide', a short internal open reading frame. During trans-translation Ala-aminoacylated tmRNA acts like a tRNA, entering the A-site of stalled ribosomes, displacing the stalled mRNA. The ribosome then switches to translate the ORF on the tmRNA; the nascent peptide is terminated with the 'tag peptide' encoded by the tmRNA and targeted for degradation. The ribosome is freed to recommence translation, which seems to be the essential function of trans-translation. The chain is SsrA-binding protein from Burkholderia pseudomallei (strain 1710b).